The following is a 155-amino-acid chain: MSRKGSTPQRTVLPDPKHGSETIARFINMVMQSGKKSVAEKIVYGAMDVIGEKNPNAVELVQKALDNVAPAVEVKSRRVGGATYQVPVEVRSSRRMALAMRWLIDSARKRGENTMPRKLAAELLDASESRGGAIKKREETHRMAEANKAFAHYRW.

Belongs to the universal ribosomal protein uS7 family. In terms of assembly, part of the 30S ribosomal subunit. Contacts proteins S9 and S11.

Its function is as follows. One of the primary rRNA binding proteins, it binds directly to 16S rRNA where it nucleates assembly of the head domain of the 30S subunit. Is located at the subunit interface close to the decoding center, probably blocks exit of the E-site tRNA. The protein is Small ribosomal subunit protein uS7 of Xanthomonas campestris pv. campestris (strain 8004).